Reading from the N-terminus, the 284-residue chain is Lipoyl synthase (284 aa).

The [4Fe-4S] cluster site is built by Cys-34, Cys-39, Cys-45, Cys-60, Cys-64, Cys-67, and Ser-272. Positions 46–261 (FARRTATFMI…EEIGYKLGFK (216 aa)) constitute a Radical SAM core domain.

It belongs to the radical SAM superfamily. Lipoyl synthase family. [4Fe-4S] cluster is required as a cofactor.

It localises to the cytoplasm. The catalysed reaction is [[Fe-S] cluster scaffold protein carrying a second [4Fe-4S](2+) cluster] + N(6)-octanoyl-L-lysyl-[protein] + 2 oxidized [2Fe-2S]-[ferredoxin] + 2 S-adenosyl-L-methionine + 4 H(+) = [[Fe-S] cluster scaffold protein] + N(6)-[(R)-dihydrolipoyl]-L-lysyl-[protein] + 4 Fe(3+) + 2 hydrogen sulfide + 2 5'-deoxyadenosine + 2 L-methionine + 2 reduced [2Fe-2S]-[ferredoxin]. It functions in the pathway protein modification; protein lipoylation via endogenous pathway; protein N(6)-(lipoyl)lysine from octanoyl-[acyl-carrier-protein]: step 2/2. Catalyzes the radical-mediated insertion of two sulfur atoms into the C-6 and C-8 positions of the octanoyl moiety bound to the lipoyl domains of lipoate-dependent enzymes, thereby converting the octanoylated domains into lipoylated derivatives. This is Lipoyl synthase from Caldanaerobacter subterraneus subsp. tengcongensis (strain DSM 15242 / JCM 11007 / NBRC 100824 / MB4) (Thermoanaerobacter tengcongensis).